The primary structure comprises 339 residues: 2-oxoisovalerate dehydrogenase subunit beta (339 aa).

In terms of assembly, heterodimer of an alpha and a beta chain. Requires thiamine diphosphate as cofactor.

It catalyses the reaction N(6)-[(R)-lipoyl]-L-lysyl-[protein] + 3-methyl-2-oxobutanoate + H(+) = N(6)-[(R)-S(8)-2-methylpropanoyldihydrolipoyl]-L-lysyl-[protein] + CO2. Its function is as follows. The branched-chain alpha-keto dehydrogenase complex catalyzes the overall conversion of alpha-keto acids to acyl-CoA and CO(2). It contains multiple copies of three enzymatic components: branched-chain alpha-keto acid decarboxylase (E1), lipoamide acyltransferase (E2) and lipoamide dehydrogenase (E3). The chain is 2-oxoisovalerate dehydrogenase subunit beta (bkdA2) from Pseudomonas putida (Arthrobacter siderocapsulatus).